Consider the following 195-residue polypeptide: uncharacterized protein (195 aa).

An N-terminal signal peptide occupies residues M1 to A17. Residue N75 is glycosylated (N-linked (GlcNAc...) asparagine).

Its subcellular location is the secreted. This is an uncharacterized protein from Arthroderma benhamiae (strain ATCC MYA-4681 / CBS 112371) (Trichophyton mentagrophytes).